The primary structure comprises 225 residues: UPF0758 protein Ping_0056 (225 aa).

An MPN domain is found at 103 to 225 (ALTSAAQTKA…CTSFAENGWI (123 aa)). The Zn(2+) site is built by histidine 174, histidine 176, and aspartate 187. The JAMM motif signature appears at 174–187 (HNHPSGDPSASEAD).

It belongs to the UPF0758 family.

In Psychromonas ingrahamii (strain DSM 17664 / CCUG 51855 / 37), this protein is UPF0758 protein Ping_0056.